Consider the following 449-residue polypeptide: Tubulin beta chain (449 aa).

Residues glutamine 11, glutamate 69, serine 138, glycine 142, threonine 143, glycine 144, asparagine 204, and asparagine 226 each contribute to the GTP site. Glutamate 69 contacts Mg(2+). The interval 426 to 449 (QDATAEEEGEFDEEEGEMGAEEGA) is disordered. Residues 429-449 (TAEEEGEFDEEEGEMGAEEGA) show a composition bias toward acidic residues.

Belongs to the tubulin family. In terms of assembly, dimer of alpha and beta chains. A typical microtubule is a hollow water-filled tube with an outer diameter of 25 nm and an inner diameter of 15 nM. Alpha-beta heterodimers associate head-to-tail to form protofilaments running lengthwise along the microtubule wall with the beta-tubulin subunit facing the microtubule plus end conferring a structural polarity. Microtubules usually have 13 protofilaments but different protofilament numbers can be found in some organisms and specialized cells. The cofactor is Mg(2+).

It localises to the cytoplasm. The protein localises to the cytoskeleton. Functionally, tubulin is the major constituent of microtubules, a cylinder consisting of laterally associated linear protofilaments composed of alpha- and beta-tubulin heterodimers. Microtubules grow by the addition of GTP-tubulin dimers to the microtubule end, where a stabilizing cap forms. Below the cap, tubulin dimers are in GDP-bound state, owing to GTPase activity of alpha-tubulin. In Toxoplasma gondii, this protein is Tubulin beta chain.